Consider the following 294-residue polypeptide: Cytidine deaminase (294 aa).

CMP/dCMP-type deaminase domains lie at 48 to 168 (DEDA…FGPK) and 186 to 294 (LTGD…VLLA). 89 to 91 (NME) provides a ligand contact to substrate. His102 serves as a coordination point for Zn(2+). Glu104 (proton donor) is an active-site residue. 2 residues coordinate Zn(2+): Cys129 and Cys132.

The protein belongs to the cytidine and deoxycytidylate deaminase family. Homodimer. It depends on Zn(2+) as a cofactor.

It catalyses the reaction cytidine + H2O + H(+) = uridine + NH4(+). The catalysed reaction is 2'-deoxycytidine + H2O + H(+) = 2'-deoxyuridine + NH4(+). In terms of biological role, this enzyme scavenges exogenous and endogenous cytidine and 2'-deoxycytidine for UMP synthesis. This Escherichia coli O157:H7 protein is Cytidine deaminase.